Reading from the N-terminus, the 407-residue chain is [Pyruvate dehydrogenase (acetyl-transferring)] kinase isozyme 2, mitochondrial (407 aa).

A Histidine kinase domain is found at 135-364 (LEYKDTYGDD…DAVIYLKALS (230 aa)). Phosphotyrosine occurs at positions 215 and 216. ATP contacts are provided by residues 251–258 (ELFKNAMR), aspartate 290, 309–310 (ST), and 325–330 (GFGYGL). Lysine 376 carries the N6-succinyllysine modification.

Belongs to the PDK/BCKDK protein kinase family. As to quaternary structure, homodimer, and heterodimer with PDK1. Interacts with the pyruvate dehydrogenase complex subunit DLAT, and is part of the multimeric pyruvate dehydrogenase complex that contains multiple copies of pyruvate dehydrogenase (E1), dihydrolipoamide acetyltransferase (DLAT, E2) and lipoamide dehydrogenase (DLD, E3). Detected in heart (at protein level).

It localises to the mitochondrion matrix. The enzyme catalyses L-seryl-[pyruvate dehydrogenase E1 alpha subunit] + ATP = O-phospho-L-seryl-[pyruvate dehydrogenase E1 alpha subunit] + ADP + H(+). In terms of biological role, kinase that plays a key role in the regulation of glucose and fatty acid metabolism and homeostasis via phosphorylation of the pyruvate dehydrogenase subunits PDHA1 and PDHA2. This inhibits pyruvate dehydrogenase activity, and thereby regulates metabolite flux through the tricarboxylic acid cycle, down-regulates aerobic respiration and inhibits the formation of acetyl-coenzyme A from pyruvate. Inhibition of pyruvate dehydrogenase decreases glucose utilization and increases fat metabolism. Mediates cellular responses to insulin. Plays an important role in maintaining normal blood glucose levels and in metabolic adaptation to nutrient availability. Via its regulation of pyruvate dehydrogenase activity, plays an important role in maintaining normal blood pH and in preventing the accumulation of ketone bodies under starvation. Plays a role in the regulation of cell proliferation and in resistance to apoptosis under oxidative stress. Plays a role in p53/TP53-mediated apoptosis. The chain is [Pyruvate dehydrogenase (acetyl-transferring)] kinase isozyme 2, mitochondrial (Pdk2) from Mus musculus (Mouse).